We begin with the raw amino-acid sequence, 1406 residues long: Carboxypeptidase D (1406 aa).

An N-terminal signal peptide occupies residues 1–25 (MPTLGLLFASIGIAVLAMGVPHCRG). The Extracellular segment spans residues 26-1312 (YTIKEDESFL…VNEHVFGLPR (1287 aa)). Peptidase M14 domains lie at 39–335 (HYAS…LRQA) and 455–760 (EHHN…IEQV). Residues His101 and Glu104 each coordinate Zn(2+). The N-linked (GlcNAc...) asparagine glycan is linked to Asn133. 3 cysteine pairs are disulfide-bonded: Cys156-Cys309, Cys236-Cys237, and Cys268-Cys308. His217 serves as a coordination point for Zn(2+). An N-linked (GlcNAc...) asparagine glycan is attached at Asn269. Residue Glu305 is the Proton donor/acceptor of the active site. Asn458 carries N-linked (GlcNAc...) asparagine glycosylation. Positions 517 and 520 each coordinate Zn(2+). Residues Asn549 and Asn612 are each glycosylated (N-linked (GlcNAc...) asparagine). His626 is a binding site for Zn(2+). A glycan (N-linked (GlcNAc...) asparagine) is linked at Asn652. Residue Glu730 is the Proton donor/acceptor of the active site. N-linked (GlcNAc...) asparagine glycans are attached at residues Asn787, Asn808, Asn981, Asn1152, and Asn1251. One can recognise a Peptidase M14 3 domain in the interval 863–1121 (RYHTNPQVRA…DKIKNFLALV (259 aa)). The chain crosses the membrane as a helical span at residues 1313–1333 (FLFILCASVLIIVGVIVCVLC). The Cytoplasmic segment spans residues 1334-1406 (AQFWFYRRHR…TNYSFIIQAA (73 aa)). The short motif at 1343–1345 (RGD) is the Cell attachment site element. Residue Ser1380 is modified to Phosphoserine.

It belongs to the peptidase M14 family. As to quaternary structure, monomer. Zn(2+) is required as a cofactor. As to expression, expressed in the central nervous system (CNS) of adults and larvae. In the adult brain, increased levels of expression in the mushroom body (MB) and neurosecretory cells.

The protein localises to the membrane. It localises to the cytoplasm. It is found in the perinuclear region. The protein resides in the golgi apparatus. Its subcellular location is the trans-Golgi network. The protein localises to the secreted. The catalysed reaction is Releases C-terminal Arg and Lys from polypeptides.. Inhibited by 2-guanidinoethylmercaptosuccinic acid (GEMSA). Its function is as follows. Metallocarboxypeptidase that catalyzes the release of C-terminal arginine or lysine residues from peptides and proteins. Functionally important for processing a broad range of proteins including growth factors, peptide hormones (such as Akh) and neuropeptides. Consequently, it is involved in a wide range of processes including viability, memory formation, locomotive activity, wing formation, and peptide-regulated behaviors such as starvation-induced hyperactivity, appetitive gustatory preference, and cold and ethanol sensitivity. Key enzyme in neuropeptide processing. Involved in regulation of memory formation, possibly via the insulin pathway in neurosecretory cells. This chain is Carboxypeptidase D, found in Drosophila melanogaster (Fruit fly).